The chain runs to 203 residues: NAD(P)H-quinone oxidoreductase subunit I (203 aa).

4Fe-4S ferredoxin-type domains follow at residues 55 to 84 (GRIHFEFDKCIACEVCVRVCPINLPVVDWE) and 95 to 124 (KHYSIDFGVCIFCGNCVEYCPTNCLSMTEE). Cys64, Cys67, Cys70, Cys74, Cys104, Cys107, Cys110, and Cys114 together coordinate [4Fe-4S] cluster.

Belongs to the complex I 23 kDa subunit family. As to quaternary structure, NDH-1 is composed of at least 11 different subunits. The cofactor is [4Fe-4S] cluster.

The protein localises to the cellular thylakoid membrane. The catalysed reaction is a plastoquinone + NADH + (n+1) H(+)(in) = a plastoquinol + NAD(+) + n H(+)(out). It carries out the reaction a plastoquinone + NADPH + (n+1) H(+)(in) = a plastoquinol + NADP(+) + n H(+)(out). Its function is as follows. NDH-1 shuttles electrons from an unknown electron donor, via FMN and iron-sulfur (Fe-S) centers, to quinones in the respiratory and/or the photosynthetic chain. The immediate electron acceptor for the enzyme in this species is believed to be plastoquinone. Couples the redox reaction to proton translocation, and thus conserves the redox energy in a proton gradient. In Picosynechococcus sp. (strain ATCC 27264 / PCC 7002 / PR-6) (Agmenellum quadruplicatum), this protein is NAD(P)H-quinone oxidoreductase subunit I (ndhI).